The sequence spans 732 residues: MDQKTIKAHKISDSEYKKILEILGREPNLLELGIFSSMWSEHCSYKSSKKYLNGFPTKAPWVIQGPGENAGVIDIGDGMAAVFKMESHNHPSYIEPFQGAATGVGGILRDIFTMGARVEVNMNSLRFGDVIGDSKVNRYQRYLVKGVVGGIAHYGNCMGIPTIGGETTFDSSFNGNILVNAFALGIVKSDEIFYGKAEGAGNPVIYVGSKTGRDGLGGAVMASDSFNEENKSLRPTVQVGDPFAEKLLMEACLELFKKGYIIGIQDMGAAGLTSSSFEMAGRSGSGMIMHLDKVPMRENEMTPYELMLSESQERMLICAKKGCEEKVKEIFAKWDLDAEVIGEVTNSGNMELFWYGKKVADVPIAPLSEAAPILDRPVKKPAYLDKIASGNLCGCGVSKISNKEAFDKIFAEPEILNKNFIYDQYDANIGTNTIKKPGFLGAAAIRVKENGVNLCMAMDCNSRMNYINPRIGAALAVAASGRKVAMSGAVPLAITDCLNYGNPQNEEVMWQFAQGCEGIKAACKALNTPVVSGNVSLYNETDGVSIQPTPAIVMVGTAKNALLPSHFTKNGVNVYLIGDTKGVFAGSLYMKVVENRITGTLPEIDFIKERALWDLVIEANKCEILEFANSVGVGGVAITLAKMACIEQIGGNFDMIVDDDRDIFDESFSRAIVGVKNETEFLKLAKKSGLKFTKLGASGGETFKINEISVKIKQLAEIYFNKFSQIIKGETF.

His-42 is an active-site residue. 2 residues coordinate ATP: Tyr-45 and Lys-84. Residue Glu-86 coordinates Mg(2+). Substrate-binding positions include 87-90 (SHNH) and Arg-109. The Proton acceptor role is filled by His-88. Asp-110 contacts Mg(2+). Gln-238 lines the substrate pocket. Residue Asp-266 coordinates Mg(2+). 310-312 (ESQ) lines the substrate pocket. Residues Asp-496 and Gly-533 each coordinate ATP. A Mg(2+)-binding site is contributed by Asn-534. Ser-536 is a binding site for substrate.

The protein belongs to the FGAMS family. Monomer. Part of the FGAM synthase complex composed of 1 PurL, 1 PurQ and 2 PurS subunits.

The protein localises to the cytoplasm. It catalyses the reaction N(2)-formyl-N(1)-(5-phospho-beta-D-ribosyl)glycinamide + L-glutamine + ATP + H2O = 2-formamido-N(1)-(5-O-phospho-beta-D-ribosyl)acetamidine + L-glutamate + ADP + phosphate + H(+). Its pathway is purine metabolism; IMP biosynthesis via de novo pathway; 5-amino-1-(5-phospho-D-ribosyl)imidazole from N(2)-formyl-N(1)-(5-phospho-D-ribosyl)glycinamide: step 1/2. In terms of biological role, part of the phosphoribosylformylglycinamidine synthase complex involved in the purines biosynthetic pathway. Catalyzes the ATP-dependent conversion of formylglycinamide ribonucleotide (FGAR) and glutamine to yield formylglycinamidine ribonucleotide (FGAM) and glutamate. The FGAM synthase complex is composed of three subunits. PurQ produces an ammonia molecule by converting glutamine to glutamate. PurL transfers the ammonia molecule to FGAR to form FGAM in an ATP-dependent manner. PurS interacts with PurQ and PurL and is thought to assist in the transfer of the ammonia molecule from PurQ to PurL. The chain is Phosphoribosylformylglycinamidine synthase subunit PurL from Campylobacter hominis (strain ATCC BAA-381 / DSM 21671 / CCUG 45161 / LMG 19568 / NCTC 13146 / CH001A).